A 212-amino-acid chain; its full sequence is Ribosomal RNA small subunit methyltransferase G (212 aa).

Residues Gly75, Leu80, 126-127, and Arg141 each bind S-adenosyl-L-methionine; that span reads AQ.

The protein belongs to the methyltransferase superfamily. RNA methyltransferase RsmG family.

The protein resides in the cytoplasm. Specifically methylates the N7 position of guanine in position 518 of 16S rRNA. This Beutenbergia cavernae (strain ATCC BAA-8 / DSM 12333 / CCUG 43141 / JCM 11478 / NBRC 16432 / NCIMB 13614 / HKI 0122) protein is Ribosomal RNA small subunit methyltransferase G.